Here is a 105-residue protein sequence, read N- to C-terminus: Antitoxin YafW (105 aa).

The protein belongs to the CbeA/YafW/YfjZ antitoxin family.

Functionally, antitoxin component of a type IV toxin-antitoxin (TA) system. Antitoxin that counteracts the effect of cognate toxin YkfI. It does not seem to bind to the cognate toxin but instead induces toxin loss by an unknown mechanism. Co-overexpression of toxin YkfI and antitoxin YafW leads to formation of elongated cells. The polypeptide is Antitoxin YafW (yafW) (Escherichia coli (strain K12)).